A 1465-amino-acid chain; its full sequence is Gag-Pol polyprotein (1465 aa).

G2 carries the N-myristoyl glycine; by host lipid modification. Residues V7–L31 are interaction with Gp41. The Nuclear export signal motif lies at L16–R22. A Nuclear localization signal motif is present at residues K26 to K32. Positions Q105–K114 are enriched in basic and acidic residues. Residues Q105–N129 are disordered. Phosphotyrosine; by host is present on Y130. The interval N186–Q223 is interaction with human PPIA/CYPA and NUP153. A dimerization/Multimerization of capsid protein p24 region spans residues Y274–M360. 2 CCHC-type zinc fingers span residues V388 to A405 and Q409 to E426. The disordered stretch occupies residues A441 to R508. The span at D484–E501 shows a compositional bias: basic and acidic residues. Residues P513 to L517 are dimerization of protease. Residues V532 to I601 enclose the Peptidase A2 domain. Catalysis depends on D537, which acts as the For protease activity; shared with dimeric partner. Dimerization of protease stretches follow at residues G561–N567 and N600–P612. The 190-residue stretch at E655 to L844 folds into the Reverse transcriptase domain. Mg(2+) contacts are provided by D720, D795, and D796. Residues F837 to W845 form an RT 'primer grip' region. Residues W1007–W1023 carry the Tryptophan repeat motif motif. One can recognise an RNase H type-1 domain in the interval L1043 to R1166. The Mg(2+) site is built by D1052, E1087, D1107, and D1158. The segment at E1172–Q1213 adopts an Integrase-type zinc-finger fold. Positions 1181, 1185, 1209, and 1212 each coordinate Zn(2+). The Integrase catalytic domain maps to Q1222 to I1373. Positions 1233, 1285, and 1321 each coordinate Mg(2+). Positions F1392–H1439 form a DNA-binding region, integrase-type.

In terms of assembly, homotrimer; further assembles as hexamers of trimers. Interacts with gp41 (via C-terminus). Interacts with host CALM1; this interaction induces a conformational change in the Matrix protein, triggering exposure of the myristate group. Interacts with host AP3D1; this interaction allows the polyprotein trafficking to multivesicular bodies during virus assembly. Part of the pre-integration complex (PIC) which is composed of viral genome, matrix protein, Vpr and integrase. As to quaternary structure, homodimer; the homodimer further multimerizes as homohexamers or homopentamers. Interacts with human PPIA/CYPA. Interacts with human NUP153. Interacts with host PDZD8; this interaction stabilizes the capsid. Interacts with monkey TRIM5; this interaction destabilizes the capsid. Homodimer, whose active site consists of two apposed aspartic acid residues. In terms of assembly, heterodimer of p66 RT and p51 RT (RT p66/p51). Heterodimerization of RT is essential for DNA polymerase activity. The overall folding of the subdomains is similar in p66 RT and p51 RT but the spatial arrangements of the subdomains are dramatically different. As to quaternary structure, homotetramer; may further associate as a homohexadecamer. Part of the pre-integration complex (PIC) which is composed of viral genome, matrix protein, Vpr and integrase. Interacts with human SMARCB1/INI1 and human PSIP1/LEDGF isoform 1. Interacts with human KPNA3; this interaction might play a role in nuclear import of the pre-integration complex. Interacts with human NUP153; this interaction might play a role in nuclear import of the pre-integration complex. It depends on Mg(2+) as a cofactor. Post-translationally, specific enzymatic cleavages by the viral protease yield mature proteins. The protease is released by autocatalytic cleavage. The polyprotein is cleaved during and after budding, this process is termed maturation. Proteolytic cleavage of p66 RT removes the RNase H domain to yield the p51 RT subunit. Nucleocapsid protein p7 might be further cleaved after virus entry.

It is found in the host cell membrane. The protein resides in the host endosome. The protein localises to the host multivesicular body. It localises to the virion membrane. Its subcellular location is the host nucleus. It is found in the host cytoplasm. The protein resides in the virion. It catalyses the reaction Endopeptidase for which the P1 residue is preferably hydrophobic.. The enzyme catalyses Endohydrolysis of RNA in RNA/DNA hybrids. Three different cleavage modes: 1. sequence-specific internal cleavage of RNA. Human immunodeficiency virus type 1 and Moloney murine leukemia virus enzymes prefer to cleave the RNA strand one nucleotide away from the RNA-DNA junction. 2. RNA 5'-end directed cleavage 13-19 nucleotides from the RNA end. 3. DNA 3'-end directed cleavage 15-20 nucleotides away from the primer terminus.. The catalysed reaction is 3'-end directed exonucleolytic cleavage of viral RNA-DNA hybrid.. It carries out the reaction DNA(n) + a 2'-deoxyribonucleoside 5'-triphosphate = DNA(n+1) + diphosphate. Its activity is regulated as follows. Protease: The viral protease is inhibited by many synthetic protease inhibitors (PIs), such as amprenavir, atazanavir, indinavir, loprinavir, nelfinavir, ritonavir and saquinavir. Use of protease inhibitors in tritherapy regimens permit more ambitious therapeutic strategies. Reverse transcriptase/ribonuclease H: RT can be inhibited either by nucleoside RT inhibitors (NRTIs) or by non nucleoside RT inhibitors (NNRTIs). NRTIs act as chain terminators, whereas NNRTIs inhibit DNA polymerization by binding a small hydrophobic pocket near the RT active site and inducing an allosteric change in this region. Classical NRTIs are abacavir, adefovir (PMEA), didanosine (ddI), lamivudine (3TC), stavudine (d4T), tenofovir (PMPA), zalcitabine (ddC), and zidovudine (AZT). Classical NNRTIs are atevirdine (BHAP U-87201E), delavirdine, efavirenz (DMP-266), emivirine (I-EBU), and nevirapine (BI-RG-587). The tritherapies used as a basic effective treatment of AIDS associate two NRTIs and one NNRTI. In terms of biological role, mediates, with Gag polyprotein, the essential events in virion assembly, including binding the plasma membrane, making the protein-protein interactions necessary to create spherical particles, recruiting the viral Env proteins, and packaging the genomic RNA via direct interactions with the RNA packaging sequence (Psi). Gag-Pol polyprotein may regulate its own translation, by the binding genomic RNA in the 5'-UTR. At low concentration, the polyprotein would promote translation, whereas at high concentration, the polyprotein would encapsidate genomic RNA and then shut off translation. Its function is as follows. Targets the polyprotein to the plasma membrane via a multipartite membrane-binding signal, that includes its myristoylated N-terminus. Matrix protein is part of the pre-integration complex. Implicated in the release from host cell mediated by Vpu. Binds to RNA. Forms the conical core that encapsulates the genomic RNA-nucleocapsid complex in the virion. Most core are conical, with only 7% tubular. The core is constituted by capsid protein hexamer subunits. The core is disassembled soon after virion entry. Host restriction factors such as TRIM5-alpha or TRIMCyp bind retroviral capsids and cause premature capsid disassembly, leading to blocks in reverse transcription. Capsid restriction by TRIM5 is one of the factors which restricts HIV-1 to the human species. Host PIN1 apparently facilitates the virion uncoating. On the other hand, interactions with PDZD8 or CYPA stabilize the capsid. Functionally, encapsulates and protects viral dimeric unspliced genomic RNA (gRNA). Binds these RNAs through its zinc fingers. Acts as a nucleic acid chaperone which is involved in rearangement of nucleic acid secondary structure during gRNA retrotranscription. Also facilitates template switch leading to recombination. As part of the polyprotein, participates in gRNA dimerization, packaging, tRNA incorporation and virion assembly. In terms of biological role, aspartyl protease that mediates proteolytic cleavages of Gag and Gag-Pol polyproteins during or shortly after the release of the virion from the plasma membrane. Cleavages take place as an ordered, step-wise cascade to yield mature proteins. This process is called maturation. Displays maximal activity during the budding process just prior to particle release from the cell. Also cleaves Nef and Vif, probably concomitantly with viral structural proteins on maturation of virus particles. Hydrolyzes host EIF4GI and PABP1 in order to shut off the capped cellular mRNA translation. The resulting inhibition of cellular protein synthesis serves to ensure maximal viral gene expression and to evade host immune response. Its function is as follows. Multifunctional enzyme that converts the viral RNA genome into dsDNA in the cytoplasm, shortly after virus entry into the cell. This enzyme displays a DNA polymerase activity that can copy either DNA or RNA templates, and a ribonuclease H (RNase H) activity that cleaves the RNA strand of RNA-DNA heteroduplexes in a partially processive 3' to 5' endonucleasic mode. Conversion of viral genomic RNA into dsDNA requires many steps. A tRNA(3)-Lys binds to the primer-binding site (PBS) situated at the 5'-end of the viral RNA. RT uses the 3' end of the tRNA primer to perform a short round of RNA-dependent minus-strand DNA synthesis. The reading proceeds through the U5 region and ends after the repeated (R) region which is present at both ends of viral RNA. The portion of the RNA-DNA heteroduplex is digested by the RNase H, resulting in a ssDNA product attached to the tRNA primer. This ssDNA/tRNA hybridizes with the identical R region situated at the 3' end of viral RNA. This template exchange, known as minus-strand DNA strong stop transfer, can be either intra- or intermolecular. RT uses the 3' end of this newly synthesized short ssDNA to perform the RNA-dependent minus-strand DNA synthesis of the whole template. RNase H digests the RNA template except for two polypurine tracts (PPTs) situated at the 5'-end and near the center of the genome. It is not clear if both polymerase and RNase H activities are simultaneous. RNase H probably can proceed both in a polymerase-dependent (RNA cut into small fragments by the same RT performing DNA synthesis) and a polymerase-independent mode (cleavage of remaining RNA fragments by free RTs). Secondly, RT performs DNA-directed plus-strand DNA synthesis using the PPTs that have not been removed by RNase H as primers. PPTs and tRNA primers are then removed by RNase H. The 3' and 5' ssDNA PBS regions hybridize to form a circular dsDNA intermediate. Strand displacement synthesis by RT to the PBS and PPT ends produces a blunt ended, linear dsDNA copy of the viral genome that includes long terminal repeats (LTRs) at both ends. Catalyzes viral DNA integration into the host chromosome, by performing a series of DNA cutting and joining reactions. This enzyme activity takes place after virion entry into a cell and reverse transcription of the RNA genome in dsDNA. The first step in the integration process is 3' processing. This step requires a complex comprising the viral genome, matrix protein, Vpr and integrase. This complex is called the pre-integration complex (PIC). The integrase protein removes 2 nucleotides from each 3' end of the viral DNA, leaving recessed CA OH's at the 3' ends. In the second step, the PIC enters cell nucleus. This process is mediated through integrase and Vpr proteins, and allows the virus to infect a non dividing cell. This ability to enter the nucleus is specific of lentiviruses, other retroviruses cannot and rely on cell division to access cell chromosomes. In the third step, termed strand transfer, the integrase protein joins the previously processed 3' ends to the 5' ends of strands of target cellular DNA at the site of integration. The 5'-ends are produced by integrase-catalyzed staggered cuts, 5 bp apart. A Y-shaped, gapped, recombination intermediate results, with the 5'-ends of the viral DNA strands and the 3' ends of target DNA strands remaining unjoined, flanking a gap of 5 bp. The last step is viral DNA integration into host chromosome. This involves host DNA repair synthesis in which the 5 bp gaps between the unjoined strands are filled in and then ligated. Since this process occurs at both cuts flanking the HIV genome, a 5 bp duplication of host DNA is produced at the ends of HIV-1 integration. Alternatively, Integrase may catalyze the excision of viral DNA just after strand transfer, this is termed disintegration. This is Gag-Pol polyprotein (gag-pol) from Human immunodeficiency virus type 2 subtype B (isolate D205) (HIV-2).